The primary structure comprises 516 residues: GMP synthase [glutamine-hydrolyzing] (516 aa).

Residues 7-203 enclose the Glutamine amidotransferase type-1 domain; sequence SVIVLDFGSQ…LIDIAGITPD (197 aa). Residue cysteine 84 is the Nucleophile of the active site. Residues histidine 177 and glutamate 179 contribute to the active site. Residues 204–391 enclose the GMPS ATP-PPase domain; the sequence is WSPKSFIQHQ…LGIAEDILMR (188 aa). Position 231-237 (231-237) interacts with ATP; sequence SGGVDST.

Homodimer.

It carries out the reaction XMP + L-glutamine + ATP + H2O = GMP + L-glutamate + AMP + diphosphate + 2 H(+). It functions in the pathway purine metabolism; GMP biosynthesis; GMP from XMP (L-Gln route): step 1/1. In terms of biological role, catalyzes the synthesis of GMP from XMP. This chain is GMP synthase [glutamine-hydrolyzing], found in Chlorobaculum tepidum (strain ATCC 49652 / DSM 12025 / NBRC 103806 / TLS) (Chlorobium tepidum).